The chain runs to 356 residues: Putative transposase y4zB (356 aa).

Residues 1–19 (MITTGTPTTRRSAAGTAGA) are compositionally biased toward low complexity. Disordered stretches follow at residues 1 to 54 (MITT…PLAD) and 334 to 356 (PPPV…FAYV).

This sequence belongs to the transposase 11 family.

The chain is Putative transposase y4zB from Sinorhizobium fredii (strain NBRC 101917 / NGR234).